We begin with the raw amino-acid sequence, 292 residues long: Fat storage-inducing transmembrane protein 1 (292 aa).

Residues 1–18 (MERGPVVGAGLGAGARIQ) are Lumenal-facing. Residues 19-39 (ALLGCLLKVLLWVASALLYFG) traverse the membrane as a helical segment. The Cytoplasmic portion of the chain corresponds to 40 to 54 (SEQAARLLGSPCLRR). A helical transmembrane segment spans residues 55–75 (LYHAWLAAVVIFGPLLQFHVN). At 76–94 (PRTIFASHGNFFNIKFVNS) the chain is on the lumenal side. The helical transmembrane segment at 95–115 (AWGWTCTFLGGFVLLVVFLAT) threads the bilayer. Residues 116-141 (RRVAVTARHLSRLVVGAAVWRGAGRA) lie on the Cytoplasmic side of the membrane. Residues 142–162 (FLLIEDLTGSCFEPLPQGLLL) traverse the membrane as a helical segment. At 163–187 (HELPDRRSCLAAGHQWRGYTVSSHT) the chain is on the lumenal side. His186 is an active-site residue. The helical transmembrane segment at 188 to 208 (FLLTFCCLLMAEEAAVFAKYL) threads the bilayer. Residues 209–220 (AHGLPAGAPLRL) lie on the Cytoplasmic side of the membrane. Residues 221–241 (VFLLNVLLLGLWNFLLLCTVI) form a helical membrane-spanning segment. Residues 242-249 (YFHQYTHK) lie on the Lumenal side of the membrane. His244 is an active-site residue. Residues 250 to 270 (VVGAAVGTFAWYLTYGSWYHQ) form a helical membrane-spanning segment. Residues 271–292 (PWSPGSPGHGLFPRPHSSRKHN) are Cytoplasmic-facing.

This sequence belongs to the FIT family. FIT1 subfamily. Primarily expressed in heart and skeletal muscle.

It is found in the endoplasmic reticulum membrane. In terms of biological role, plays an important role in the formation of lipid droplets (LDs) which are storage organelles at the center of lipid and energy homeostasis. Directly binds to diacylglycerol (DAGs) and triacylglycerol. The sequence is that of Fat storage-inducing transmembrane protein 1 from Homo sapiens (Human).